The primary structure comprises 147 residues: Cyclic di-AMP receptor B (147 aa).

Positions 18–78 (MIEADKVAHV…SIFGLERIEF (61 aa)) constitute a CBS domain. The 3',3'-c-di-AMP site is built by Lys23, Ala25, Thr46, Ala47, and Arg131.

Homodimer. Forms a homodimer with a parallel, head-to-head assembly of the monomers. Under conditions of potassium starvation and corresponding low c-di-AMP levels, apo-DarB specifically interacts with the N-terminal region of the RelA. Under the same conditions, apo-DarB also specifically interacts with the C-terminal part of the pyruvate carboxylase.

Binds c-di-AMP. Binding of c-di-AMP to DarB inhibits the interaction with RelA and PYC. Functionally, involved in the c-di-AMP-dependent regulation of the bacterial stringent response. Modulates the activities of at least two enzymes under conditions of potassium limitation. Apo-DarB regulates the activity of the GTP pyrophosphokinase RelA by interacting directly with RelA, leading to stimulation of (p)ppGpp synthesis and induction of the stringent response. Apo-DarB also regulates pyruvate carboxylase (PYC) at two levels: directly at the protein level by binding to the enzyme and stimulating the synthesis of oxaloacetate and indirectly, by interaction with RelA, which leads to activation of the stringent response and to the increased expression of the pycA gene. Stimulation of these enzymes by DarB is prevented in the presence of cyclic di-AMP (c-di-AMP). The protein is Cyclic di-AMP receptor B of Bacillus subtilis (strain 168).